Consider the following 142-residue polypeptide: MLTHKILGLDVGSKTVGVAISDLMGWTAQGLDTLRINEELEDYGIEQLVTIIKENNVGSVVIGLPKNMNNSIGFRGEASLRYKELLKESLPDIEIIMWDERLSTMAAERSLLEADVSRQKRKKVIDKMAAVFILQGYLDSIQ.

This sequence belongs to the YqgF nuclease family.

The protein localises to the cytoplasm. Functionally, could be a nuclease involved in processing of the 5'-end of pre-16S rRNA. The protein is Putative pre-16S rRNA nuclease of Staphylococcus haemolyticus (strain JCSC1435).